The primary structure comprises 367 residues: Alanine racemase (367 aa).

The active-site Proton acceptor; specific for D-alanine is K40. Residue K40 is modified to N6-(pyridoxal phosphate)lysine. Residue R136 coordinates substrate. Y263 acts as the Proton acceptor; specific for L-alanine in catalysis. M310 contributes to the substrate binding site.

This sequence belongs to the alanine racemase family. It depends on pyridoxal 5'-phosphate as a cofactor.

The catalysed reaction is L-alanine = D-alanine. The protein operates within amino-acid biosynthesis; D-alanine biosynthesis; D-alanine from L-alanine: step 1/1. In terms of biological role, catalyzes the interconversion of L-alanine and D-alanine. May also act on other amino acids. In Lactococcus lactis subsp. cremoris (strain MG1363), this protein is Alanine racemase (alr).